A 280-amino-acid chain; its full sequence is uncharacterized protein (280 aa).

Disordered stretches follow at residues 1-83 (MELK…EEEQ) and 248-280 (IRHR…EARL). Over residues 12–25 (SAKTDNHTVYQNSP) the composition is skewed to polar residues. Basic and acidic residues-rich tracts occupy residues 41–71 (KQTR…RVDD) and 249–280 (RHRE…EARL).

The protein belongs to the chlamydial CPn_0705/CT_671/TC_0042 family.

This is an uncharacterized protein from Chlamydia pneumoniae (Chlamydophila pneumoniae).